A 340-amino-acid polypeptide reads, in one-letter code: L-threonine 3-dehydrogenase (340 aa).

Residue cysteine 38 coordinates Zn(2+). Catalysis depends on charge relay system residues threonine 40 and histidine 43. The Zn(2+) site is built by histidine 63, glutamate 64, cysteine 93, cysteine 96, cysteine 99, and cysteine 107. Residues isoleucine 175, aspartate 195, arginine 200, 261–263, and 285–286 contribute to the NAD(+) site; these read LGI and IY.

Belongs to the zinc-containing alcohol dehydrogenase family. As to quaternary structure, homotetramer. Requires Zn(2+) as cofactor.

The protein resides in the cytoplasm. It carries out the reaction L-threonine + NAD(+) = (2S)-2-amino-3-oxobutanoate + NADH + H(+). Its pathway is amino-acid degradation; L-threonine degradation via oxydo-reductase pathway; glycine from L-threonine: step 1/2. Functionally, catalyzes the NAD(+)-dependent oxidation of L-threonine to 2-amino-3-ketobutyrate. This Xanthomonas oryzae pv. oryzae (strain MAFF 311018) protein is L-threonine 3-dehydrogenase.